A 527-amino-acid chain; its full sequence is Peptide chain release factor 3 (527 aa).

One can recognise a tr-type G domain in the interval 9-277 (AKRRTFAIIS…AVVDWAPRPL (269 aa)). Residues 18-25 (SHPDAGKT), 86-90 (DTPGH), and 140-143 (NKLD) each bind GTP.

This sequence belongs to the TRAFAC class translation factor GTPase superfamily. Classic translation factor GTPase family. PrfC subfamily.

It localises to the cytoplasm. Its function is as follows. Increases the formation of ribosomal termination complexes and stimulates activities of RF-1 and RF-2. It binds guanine nucleotides and has strong preference for UGA stop codons. It may interact directly with the ribosome. The stimulation of RF-1 and RF-2 is significantly reduced by GTP and GDP, but not by GMP. The polypeptide is Peptide chain release factor 3 (Pseudomonas putida (strain W619)).